The primary structure comprises 597 residues: Tubulin polyglutamylase ttll-4 (597 aa).

Residues 1 to 18 (MSSGYSSAPSVSHTSSEA) show a composition bias toward polar residues. Disordered stretches follow at residues 1 to 39 (MSSGYSSAPSVSHTSSEADLNRIESYEDGVDEEASDEQR) and 80 to 107 (SKSKKKKQCPPNITIEKKNGNSSPFLKS). Residues 26–35 (YEDGVDEEAS) show a composition bias toward acidic residues. The 339-residue stretch at 134 to 472 (QSRLTWCHNS…HVPPSFDKLH (339 aa)) folds into the TTL domain. ATP contacts are provided by residues lysine 250, 256–257 (RG), 278–281 (QHYI), and 291–293 (KFD). Arginine 256 is a binding site for a protein. Arginine 317 serves as a coordination point for L-glutamate. Position 338-339 (338-339 (TN)) interacts with ATP. Residues tyrosine 340, serine 341, and lysine 358 each coordinate L-glutamate. Mg(2+) is bound by residues aspartate 418, glutamate 431, and asparagine 433. Residue lysine 449 coordinates L-glutamate.

It belongs to the tubulin--tyrosine ligase family. It depends on Mg(2+) as a cofactor.

It catalyses the reaction L-glutamyl-[protein] + L-glutamate + ATP = gamma-L-glutamyl-L-glutamyl-[protein] + ADP + phosphate + H(+). Its function is as follows. Monoglutamylase which modifies tubulin, adding a single glutamate on the gamma-carboxyl group of specific glutamate residues of target proteins. Involved in the side-chain initiation step of the polyglutamylation reaction but not in the elongation step. Preferentially modifies beta-tail tubulin over the alpha-tubulin. Involved in side-chain glutamylation of tubulin in sensory cilia. Together with ttll-5 and ttll-11, required for male mating. The polypeptide is Tubulin polyglutamylase ttll-4 (ttll-4) (Caenorhabditis briggsae).